We begin with the raw amino-acid sequence, 440 residues long: Argininosuccinate lyase (440 aa).

This sequence belongs to the lyase 1 family. Argininosuccinate lyase subfamily.

The protein localises to the cytoplasm. The catalysed reaction is 2-(N(omega)-L-arginino)succinate = fumarate + L-arginine. It functions in the pathway amino-acid biosynthesis; L-arginine biosynthesis; L-arginine from L-ornithine and carbamoyl phosphate: step 3/3. This chain is Argininosuccinate lyase, found in Clostridium botulinum (strain 657 / Type Ba4).